Reading from the N-terminus, the 120-residue chain is Glycine cleavage system H protein (120 aa).

The 83-residue stretch at 17 to 99 (VATVGITTYA…QGAGWFFKLK (83 aa)) folds into the Lipoyl-binding domain. Position 58 is an N6-lipoyllysine (Lys58).

It belongs to the GcvH family. As to quaternary structure, the glycine cleavage system is composed of four proteins: P, T, L and H. (R)-lipoate is required as a cofactor.

Functionally, the glycine cleavage system catalyzes the degradation of glycine. The H protein shuttles the methylamine group of glycine from the P protein to the T protein. In Rhizobium etli (strain CIAT 652), this protein is Glycine cleavage system H protein.